A 1027-amino-acid polypeptide reads, in one-letter code: LLGL scribble cell polarity complex component 2 (1027 aa).

WD repeat units follow at residues serine 36 to leucine 69, valine 76 to phenylalanine 117, valine 132 to isoleucine 169, alanine 193 to phenylalanine 227, leucine 233 to proline 268, alanine 282 to threonine 324, valine 332 to leucine 366, threonine 388 to serine 464, glutamine 508 to valine 583, and threonine 592 to serine 653. Serine 653 is subject to Phosphoserine. Over residues phenylalanine 654 to proline 669 the composition is skewed to basic residues. The tract at residues phenylalanine 654–alanine 678 is disordered. WD repeat units follow at residues valine 715–glutamine 771, glycine 780–lysine 832, leucine 837–serine 890, and valine 904–threonine 927. The disordered stretch occupies residues threonine 940–valine 981. Positions lysine 957 to glutamine 970 are enriched in polar residues. 2 positions are modified to phosphoserine: serine 971 and serine 1022.

This sequence belongs to the WD repeat L(2)GL family. Interacts with GPSM2/LGN, PRKCI/aPKC and PARD6B/Par-6. The complex is enhanced during mitosis. Interacts with DCAF1. Post-translationally, phosphorylated at Ser-653 by PRKCI. Phosphorylation is enhanced during cell polarization induced by calcium. Phosphorylation may occur during the cell-cell contact-induced cell polarization and may contribute to the segregation of LLGL2 from the PRKCI/aPKC and PARD6B/Par-6 complex.

The protein localises to the cytoplasm. Its function is as follows. Part of a complex with GPSM2/LGN, PRKCI/aPKC and PARD6B/Par-6, which may ensure the correct organization and orientation of bipolar spindles for normal cell division. This complex plays roles in the initial phase of the establishment of epithelial cell polarity. This chain is LLGL scribble cell polarity complex component 2 (Llgl2), found in Mus musculus (Mouse).